Reading from the N-terminus, the 638-residue chain is LIM domain kinase 2 (638 aa).

LIM zinc-binding domains follow at residues 12–63 (CQGC…CHKD) and 72–124 (CHGC…CGKC). Residues 152–239 (HISMPATTEG…TLQLLIEHDP (88 aa)) enclose the PDZ domain. The interval 280-304 (RRRSLRRSNSISKSPGPSSPKEPLL) is disordered. Positions 286–304 (RSNSISKSPGPSSPKEPLL) are enriched in low complexity. Ser-293 and Ser-298 each carry phosphoserine. Residues 331–608 (LIHGEVLGKG…DFFEALSLYL (278 aa)) enclose the Protein kinase domain. ATP contacts are provided by residues 337-345 (LGKGFFGQA) and Asn-360. Asp-451 is an active-site residue. A Phosphothreonine; by ROCK1 and CDC42BP modification is found at Thr-505.

It belongs to the protein kinase superfamily. TKL Ser/Thr protein kinase family. Binds ROCK1 and MARF1. Interacts with NISCH. In terms of processing, phosphorylated on serine and/or threonine residues by ROCK1.

The protein localises to the cytoplasm. It is found in the cytoskeleton. Its subcellular location is the spindle. It localises to the microtubule organizing center. The protein resides in the centrosome. It catalyses the reaction L-seryl-[protein] + ATP = O-phospho-L-seryl-[protein] + ADP + H(+). The enzyme catalyses L-threonyl-[protein] + ATP = O-phospho-L-threonyl-[protein] + ADP + H(+). Functionally, serine/threonine-protein kinase that plays an essential role in the regulation of actin filament dynamics. Acts downstream of several Rho family GTPase signal transduction pathways. Involved in astral microtubule organization and mitotic spindle orientation during early stages of mitosis by mediating phosphorylation of TPPP. Displays serine/threonine-specific phosphorylation of myelin basic protein and histone (MBP) in vitro. Suppresses ciliogenesis via multiple pathways; phosphorylation of CFL1, suppression of directional trafficking of ciliary vesicles to the ciliary base, and by facilitating YAP1 nuclear localization where it acts as a transcriptional corepressor of the TEAD4 target genes AURKA and PLK1. This is LIM domain kinase 2 (LIMK2) from Bos taurus (Bovine).